The following is a 143-amino-acid chain: Turripeptide VIII-01 (143 aa).

A signal peptide spans 1 to 23 (MALSLDILMSVTMVTAVLTTVNA). Residues 24–32 (EYKDSRLDS) constitute a propeptide that is removed on maturation.

In terms of processing, contains 4 disulfide bonds. In terms of tissue distribution, expressed by the venom duct.

The protein localises to the secreted. The protein is Turripeptide VIII-01 of Gemmula speciosa (Splendid gem-turris).